Here is a 237-residue protein sequence, read N- to C-terminus: Ergosterol biosynthesis protein 29 (237 aa).

The chain crosses the membrane as a helical span at residues 36-56 (ITLFLIVVGTLAFFNELYITI).

It is found in the endoplasmic reticulum membrane. Functionally, part of the third module of ergosterol biosynthesis pathway that includes the late steps of the pathway. ERG29 regulates the activity of the iron-containing C4-methylsterol oxidase ERG25. The third module or late pathway involves the ergosterol synthesis itself through consecutive reactions that mainly occur in the endoplasmic reticulum (ER) membrane. Firstly, the squalene synthase ERG9 catalyzes the condensation of 2 farnesyl pyrophosphate moieties to form squalene, which is the precursor of all steroids. Squalene synthase is crucial for balancing the incorporation of farnesyl diphosphate (FPP) into sterol and nonsterol isoprene synthesis. Secondly, the squalene epoxidase ERG1 catalyzes the stereospecific oxidation of squalene to (S)-2,3-epoxysqualene, which is considered to be a rate-limiting enzyme in steroid biosynthesis. Then, the lanosterol synthase ERG7 catalyzes the cyclization of (S)-2,3 oxidosqualene to lanosterol, a reaction that forms the sterol core. In the next steps, lanosterol is transformed to zymosterol through a complex process involving various demethylation, reduction and desaturation reactions. The lanosterol 14-alpha-demethylase ERG11 (also known as CYP51) catalyzes C14-demethylation of lanosterol to produce 4,4'-dimethyl cholesta-8,14,24-triene-3-beta-ol, which is critical for ergosterol biosynthesis. The C-14 reductase ERG24 reduces the C14=C15 double bond of 4,4-dimethyl-cholesta-8,14,24-trienol to produce 4,4-dimethyl-cholesta-8,24-dienol. 4,4-dimethyl-cholesta-8,24-dienol is substrate of the C-4 demethylation complex ERG25-ERG26-ERG27 in which ERG25 catalyzes the three-step monooxygenation required for the demethylation of 4,4-dimethyl and 4alpha-methylsterols, ERG26 catalyzes the oxidative decarboxylation that results in a reduction of the 3-beta-hydroxy group at the C-3 carbon to an oxo group, and ERG27 is responsible for the reduction of the keto group on the C-3. ERG28 has a role as a scaffold to help anchor ERG25, ERG26 and ERG27 to the endoplasmic reticulum and ERG29 regulates the activity of the iron-containing C4-methylsterol oxidase ERG25. Then, the sterol 24-C-methyltransferase ERG6 catalyzes the methyl transfer from S-adenosyl-methionine to the C-24 of zymosterol to form fecosterol. The C-8 sterol isomerase ERG2 catalyzes the reaction which results in unsaturation at C-7 in the B ring of sterols and thus converts fecosterol to episterol. The sterol-C5-desaturase ERG3 then catalyzes the introduction of a C-5 double bond in the B ring to produce 5-dehydroepisterol. The C-22 sterol desaturase ERG5 further converts 5-dehydroepisterol into ergosta-5,7,22,24(28)-tetraen-3beta-ol by forming the C-22(23) double bond in the sterol side chain. Finally, ergosta-5,7,22,24(28)-tetraen-3beta-ol is substrate of the C-24(28) sterol reductase ERG4 to produce ergosterol. Its function is as follows. Plays a role in maintaining mitochondrial and plasma membrane integrity and consequently impacting the iron homeostasis, respiratory metabolism and antioxidant response. The protein is Ergosterol biosynthesis protein 29 of Saccharomyces cerevisiae (strain ATCC 204508 / S288c) (Baker's yeast).